The following is a 162-amino-acid chain: Crossover junction endodeoxyribonuclease RuvC (162 aa).

Catalysis depends on residues Asp7, Glu67, and Asp140. Mg(2+) is bound by residues Asp7, Glu67, and Asp140.

Belongs to the RuvC family. In terms of assembly, homodimer which binds Holliday junction (HJ) DNA. The HJ becomes 2-fold symmetrical on binding to RuvC with unstacked arms; it has a different conformation from HJ DNA in complex with RuvA. In the full resolvosome a probable DNA-RuvA(4)-RuvB(12)-RuvC(2) complex forms which resolves the HJ. The cofactor is Mg(2+).

Its subcellular location is the cytoplasm. It catalyses the reaction Endonucleolytic cleavage at a junction such as a reciprocal single-stranded crossover between two homologous DNA duplexes (Holliday junction).. The RuvA-RuvB-RuvC complex processes Holliday junction (HJ) DNA during genetic recombination and DNA repair. Endonuclease that resolves HJ intermediates. Cleaves cruciform DNA by making single-stranded nicks across the HJ at symmetrical positions within the homologous arms, yielding a 5'-phosphate and a 3'-hydroxyl group; requires a central core of homology in the junction. The consensus cleavage sequence is 5'-(A/T)TT(C/G)-3'. Cleavage occurs on the 3'-side of the TT dinucleotide at the point of strand exchange. HJ branch migration catalyzed by RuvA-RuvB allows RuvC to scan DNA until it finds its consensus sequence, where it cleaves and resolves the cruciform DNA. The polypeptide is Crossover junction endodeoxyribonuclease RuvC (Pseudothermotoga lettingae (strain ATCC BAA-301 / DSM 14385 / NBRC 107922 / TMO) (Thermotoga lettingae)).